The primary structure comprises 1107 residues: Unconventional myosin-Ib (1107 aa).

Residues 15–701 (IGVGDMVLLE…TLFQLEDLRK (687 aa)) form the Myosin motor domain. Ser60 bears the Phosphoserine mark. 108–115 (GESGAGKT) contacts ATP. Lys287 participates in a covalent cross-link: Glycyl lysine isopeptide (Lys-Gly) (interchain with G-Cter in SUMO1); alternate. Lys287 participates in a covalent cross-link: Glycyl lysine isopeptide (Lys-Gly) (interchain with G-Cter in SUMO2); alternate. The tract at residues 592 to 599 (YIRCIKPN) is actin-binding. 5 IQ domains span residues 704–727 (LEDL…FLLM), 728–749 (KRSQ…RYQQ), 750–778 (IKSS…HQKR), 780–807 (KEAA…EEAR), and 808–837 (RKHA…ANAG). In terms of domain architecture, TH1 spans 923–1107 (KALYPSSVGQ…NNRLLEVAVP (185 aa)).

This sequence belongs to the TRAFAC class myosin-kinesin ATPase superfamily. Myosin family. As to expression, prominent expression is seen in the brain, lung and liver. It is also expressed in the heart and testis. A high level expression is seen in virtually all neurons (but not glia) in the postnatal and adult mouse brain and in neuroblasts of the cerebellar external granular layer.

Motor protein that may participate in process critical to neuronal development and function such as cell migration, neurite outgrowth and vesicular transport. The protein is Unconventional myosin-Ib (Myo1b) of Mus musculus (Mouse).